Consider the following 219-residue polypeptide: Orotate phosphoribosyltransferase (219 aa).

Lys26 is a binding site for 5-phospho-alpha-D-ribose 1-diphosphate. Phe34–Phe35 contributes to the orotate binding site. 5-phospho-alpha-D-ribose 1-diphosphate is bound by residues Tyr72–Lys73, Arg98, Lys99, Lys102, His104, and Asp124–Ala132. Residues Thr128 and Arg156 each contribute to the orotate site.

The protein belongs to the purine/pyrimidine phosphoribosyltransferase family. PyrE subfamily. Homodimer. It depends on Mg(2+) as a cofactor.

It carries out the reaction orotidine 5'-phosphate + diphosphate = orotate + 5-phospho-alpha-D-ribose 1-diphosphate. Its pathway is pyrimidine metabolism; UMP biosynthesis via de novo pathway; UMP from orotate: step 1/2. Functionally, catalyzes the transfer of a ribosyl phosphate group from 5-phosphoribose 1-diphosphate to orotate, leading to the formation of orotidine monophosphate (OMP). This Xanthomonas campestris pv. campestris (strain 8004) protein is Orotate phosphoribosyltransferase.